A 475-amino-acid chain; its full sequence is Phosphoethanolamine N-methyltransferase 1 (475 aa).

Belongs to the class I-like SAM-binding methyltransferase superfamily.

It catalyses the reaction phosphoethanolamine + S-adenosyl-L-methionine = N-methylethanolamine phosphate + S-adenosyl-L-homocysteine + H(+). The protein operates within phospholipid metabolism; phosphatidylcholine biosynthesis; phosphocholine from phosphoethanolamine. Its activity is regulated as follows. Feedback inhibition by phosphatidylcholine. Its function is as follows. Catalyzes the first step in the synthesis of phosphocholine by converting phosphoethanolamine into phospho-monomethylethanolamine (N-methylethanolamine phosphate). Phosphocholine is a precursor for phosphatidylcholine, a major component in membranes and a precursor itself in the production of glycoconjugates secreted by parasitic nematodes to avoid host immune responses. The polypeptide is Phosphoethanolamine N-methyltransferase 1 (Caenorhabditis elegans).